Here is a 275-residue protein sequence, read N- to C-terminus: Hydroxyethylthiazole kinase (275 aa).

Methionine 53 lines the substrate pocket. ATP is bound by residues arginine 128 and serine 174. Glycine 201 contributes to the substrate binding site.

Belongs to the Thz kinase family. The cofactor is Mg(2+).

It carries out the reaction 5-(2-hydroxyethyl)-4-methylthiazole + ATP = 4-methyl-5-(2-phosphooxyethyl)-thiazole + ADP + H(+). It participates in cofactor biosynthesis; thiamine diphosphate biosynthesis; 4-methyl-5-(2-phosphoethyl)-thiazole from 5-(2-hydroxyethyl)-4-methylthiazole: step 1/1. Functionally, catalyzes the phosphorylation of the hydroxyl group of 4-methyl-5-beta-hydroxyethylthiazole (THZ). The protein is Hydroxyethylthiazole kinase of Kineococcus radiotolerans (strain ATCC BAA-149 / DSM 14245 / SRS30216).